Consider the following 1043-residue polypeptide: Isoleucine--tRNA ligase (1043 aa).

The 'HIGH' region signature appears at 49–59 (PFATGLPHYGH). The short motif at 592-596 (KMSKR) is the 'KMSKS' region element. Residue Lys-595 coordinates ATP.

It belongs to the class-I aminoacyl-tRNA synthetase family. IleS type 2 subfamily. As to quaternary structure, monomer. It depends on Zn(2+) as a cofactor.

It localises to the cytoplasm. The enzyme catalyses tRNA(Ile) + L-isoleucine + ATP = L-isoleucyl-tRNA(Ile) + AMP + diphosphate. In terms of biological role, catalyzes the attachment of isoleucine to tRNA(Ile). As IleRS can inadvertently accommodate and process structurally similar amino acids such as valine, to avoid such errors it has two additional distinct tRNA(Ile)-dependent editing activities. One activity is designated as 'pretransfer' editing and involves the hydrolysis of activated Val-AMP. The other activity is designated 'posttransfer' editing and involves deacylation of mischarged Val-tRNA(Ile). This Chlamydia abortus (strain DSM 27085 / S26/3) (Chlamydophila abortus) protein is Isoleucine--tRNA ligase.